The chain runs to 124 residues: Fluoride-specific ion channel FluC (124 aa).

A run of 4 helical transmembrane segments spans residues 4-24, 35-55, 62-82, and 95-115; these read VLFV…ISLL, FGTL…FALG, PEIK…FSTF, and LVKA…VVYL. The Na(+) site is built by Gly-74 and Thr-77.

The protein belongs to the fluoride channel Fluc/FEX (TC 1.A.43) family.

It localises to the cell inner membrane. The catalysed reaction is fluoride(in) = fluoride(out). With respect to regulation, na(+) is not transported, but it plays an essential structural role and its presence is essential for fluoride channel function. Fluoride-specific ion channel. Important for reducing fluoride concentration in the cell, thus reducing its toxicity. The chain is Fluoride-specific ion channel FluC from Shewanella halifaxensis (strain HAW-EB4).